Reading from the N-terminus, the 428-residue chain is Adenylosuccinate synthetase (428 aa).

GTP is bound by residues 12–18 (GDEGKGK) and 40–42 (GHT). Catalysis depends on Asp13, which acts as the Proton acceptor. Mg(2+)-binding residues include Asp13 and Gly40. IMP contacts are provided by residues 13–16 (DEGK), 38–41 (NAGH), Thr128, Arg142, Gln223, Thr238, and Arg302. Residue His41 is the Proton donor of the active site. 298-304 (TTTGRPR) lines the substrate pocket. GTP-binding positions include Arg304, 330–332 (SID), and 412–414 (SVG).

It belongs to the adenylosuccinate synthetase family. Homodimer. Requires Mg(2+) as cofactor.

The protein localises to the cytoplasm. The catalysed reaction is IMP + L-aspartate + GTP = N(6)-(1,2-dicarboxyethyl)-AMP + GDP + phosphate + 2 H(+). Its pathway is purine metabolism; AMP biosynthesis via de novo pathway; AMP from IMP: step 1/2. Its function is as follows. Plays an important role in the de novo pathway of purine nucleotide biosynthesis. Catalyzes the first committed step in the biosynthesis of AMP from IMP. This chain is Adenylosuccinate synthetase, found in Shouchella clausii (strain KSM-K16) (Alkalihalobacillus clausii).